Consider the following 208-residue polypeptide: Small ribosomal subunit protein uS4 (208 aa).

Positions 97–158 constitute an S4 RNA-binding domain; that stretch reads TRLDNVIYRM…RAQKYLCVQE (62 aa).

Belongs to the universal ribosomal protein uS4 family. As to quaternary structure, part of the 30S ribosomal subunit. Contacts protein S5. The interaction surface between S4 and S5 is involved in control of translational fidelity.

In terms of biological role, one of the primary rRNA binding proteins, it binds directly to 16S rRNA where it nucleates assembly of the body of the 30S subunit. Its function is as follows. With S5 and S12 plays an important role in translational accuracy. In Xylella fastidiosa (strain 9a5c), this protein is Small ribosomal subunit protein uS4.